Here is a 270-residue protein sequence, read N- to C-terminus: Ethanolamine ammonia-lyase small subunit (270 aa).

The adenosylcob(III)alamin site is built by Val-161, Glu-182, and Cys-211.

This sequence belongs to the EutC family. The basic unit is a heterodimer which dimerizes to form tetramers. The heterotetramers trimerize; 6 large subunits form a core ring with 6 small subunits projecting outwards. Requires adenosylcob(III)alamin as cofactor.

The protein localises to the bacterial microcompartment. It catalyses the reaction ethanolamine = acetaldehyde + NH4(+). Its pathway is amine and polyamine degradation; ethanolamine degradation. Functionally, catalyzes the deamination of various vicinal amino-alcohols to oxo compounds. Allows this organism to utilize ethanolamine as the sole source of nitrogen and carbon in the presence of external vitamin B12. This Azotobacter vinelandii (strain DJ / ATCC BAA-1303) protein is Ethanolamine ammonia-lyase small subunit.